Consider the following 135-residue polypeptide: MLYPKRTKFRKYQKGRCKGCKADGTQLCFGKYGIKSCEAGRISYQAIEAARRAISRKFRRNSKIWVRVFADIPITSKPAEVRMGKGKGNTKGWIARVLKGQILFEMDCVSLSNAQQAATLAAHKLGLSIKFFKWS.

The protein belongs to the universal ribosomal protein uL16 family.

The protein localises to the mitochondrion. This is Large ribosomal subunit protein uL16m (RPL16) from Marchantia polymorpha (Common liverwort).